The sequence spans 423 residues: Ferrochelatase, mitochondrial (423 aa).

The transit peptide at 1 to 40 (MIRFCPSCFALKRTAPVLNHTSRLGNYFNNTFSKFSVNRM) directs the protein to the mitochondrion. Cys-200 is a [2Fe-2S] cluster binding site. Asp-385 is a catalytic residue. Positions 405, 408, and 413 each coordinate [2Fe-2S] cluster.

It belongs to the ferrochelatase family. Monomer. The cofactor is [2Fe-2S] cluster.

It localises to the mitochondrion inner membrane. Its subcellular location is the cytoplasm. The protein resides in the nucleus. It catalyses the reaction heme b + 2 H(+) = protoporphyrin IX + Fe(2+). It functions in the pathway porphyrin-containing compound metabolism; protoheme biosynthesis; protoheme from protoporphyrin-IX: step 1/1. In terms of biological role, catalyzes the ferrous insertion into protoporphyrin IX. The sequence is that of Ferrochelatase, mitochondrial (hem15) from Schizosaccharomyces pombe (strain 972 / ATCC 24843) (Fission yeast).